The following is a 1044-amino-acid chain: Diacylglycerol lipase-alpha (1044 aa).

Over 1–22 (MPGIVVFRRRWSVGSDDLVLPA) the chain is Cytoplasmic. Residues 23 to 43 (IFLFLLHTTWFVILSVVLFGL) traverse the membrane as a helical segment. Topologically, residues 44 to 60 (VYNPHEACSLNLVDHGR) are extracellular. The chain crosses the membrane as a helical span at residues 61 to 81 (GYLGILLSCMIAEMAIIWLSM). At 82 to 101 (RGGILYTEPRDSMQYVLYVR) the chain is on the cytoplasmic side. The helical transmembrane segment at 102 to 122 (LAILVIEFIYAIVGIVWLTQY) threads the bilayer. Residues 123–136 (YTSCNDLTAKNVTL) are Extracellular-facing. Asparagine 133 carries an N-linked (GlcNAc...) asparagine glycan. The helical transmembrane segment at 137 to 157 (GMVVCNWVVILSVCITVLCVF) threads the bilayer. The Cytoplasmic segment spans residues 158–1044 (DPTGRTFVKL…KQDDLVISAR (887 aa)). Active-site charge relay system residues include serine 472 and aspartate 524. Serine 728, serine 730, serine 733, serine 744, serine 784, serine 786, serine 808, serine 810, serine 835, serine 849, and serine 954 each carry phosphoserine. Residues 848–905 (LSKHSQDTQPLEAALGSGGVTPERPPSAANDEEEAAGGSEGGGVAPRGELALHNGRLG) form a disordered region. Residues 1013–1044 (QECLATDKIRTSTPTGHGASPTKQDDLVISAR) are disordered. Residue threonine 1025 is modified to Phosphothreonine.

The protein belongs to the AB hydrolase superfamily. Lipase family. In terms of assembly, interacts (via C-terminal) with CAMK2A; leading to the phosphorylation and inhibition of DAGLA enzymatic activity. Interacts (via PPXXF motif) with HOMER1 and HOMER2; this interaction is required for DAGLA membrane localization. It depends on Ca(2+) as a cofactor. Phosphorylated at Ser-784 and Ser-810 by CAMK2A; phosphorylation by CAMK2A inhibits diacylglycerol lipase activity.

Its subcellular location is the cell membrane. The protein resides in the cell projection. It is found in the dendritic spine membrane. The protein localises to the postsynaptic density membrane. It localises to the early endosome membrane. The catalysed reaction is a 1,2-diacyl-sn-glycerol + H2O = a 2-acylglycerol + a fatty acid + H(+). It carries out the reaction 1-octadecanoyl-2-(5Z,8Z,11Z,14Z-eicosatetraenoyl)-sn-glycerol + H2O = 2-(5Z,8Z,11Z,14Z-eicosatetraenoyl)-glycerol + octadecanoate + H(+). The enzyme catalyses 1,2-di-(9Z-octadecenoyl)-sn-glycerol + H2O = 2-(9Z-octadecenoyl)-glycerol + (9Z)-octadecenoate + H(+). It catalyses the reaction 1-(9Z-octadecenoyl)-2-(5Z,8Z,11Z,14Z-eicosatetraenoyl)-sn-glycerol + H2O = 2-(5Z,8Z,11Z,14Z-eicosatetraenoyl)-glycerol + (9Z)-octadecenoate + H(+). The catalysed reaction is 1-(9Z-octadecenoyl)-2-octadecanoyl-sn-glycerol + H2O = 2-octadecanoylglycerol + (9Z)-octadecenoate + H(+). It carries out the reaction 1-(9Z-octadecenoyl)-2-(9Z,12Z-octadecadienoyl)-sn-glycerol + H2O = 2-(9Z,12Z-octadecadienoyl)-glycerol + (9Z)-octadecenoate + H(+). The enzyme catalyses 1-(9Z-octadecenoyl)-2-O-(5Z,8Z,11Z,14Z-eicosatetraenyl)-sn-glycerol + H2O = 2-O-(5Z,8Z,11Z,14Z)-eicosatetraenylglycerol + (9Z)-octadecenoate + H(+). Inhibited by 1,2,3-triazole urea covalent inhibitors KT172, DH376 and DO34. Inhibited by p-hydroxy-mercuri-benzoate and HgCl(2), but not to PMSF. Also inhibited by RHC80267. Diacylglycerol lipase activity is inhibited by the phosphorylation of Ser-784 and Ser-810 by CAMK2A. Functionally, serine hydrolase that hydrolyzes arachidonic acid-esterified diacylglycerols (DAGs) to produce the principal endocannabinoid, 2-arachidonoylglycerol (2-AG). Preferentially hydrolyzes sn-1 fatty acids from diacylglycerols (DAG) that contain arachidonic acid (AA) esterified at the sn-2 position to biosynthesize 2-AG. Has negligible activity against other lipids including monoacylglycerols and phospholipids. Plays a key role in regulating 2-AG signaling in the CNS. Controls the activity of 2-AG as a retrograde messenger at neuronal synapses. Supports axonal growth during development and adult neurogenesis. Plays a role for eCB signaling in the physiological regulation of anxiety and depressive behaviors. Also regulates neuroinflammatory responses in the brain, in particular, LPS-induced microglial activation. This chain is Diacylglycerol lipase-alpha (Dagla), found in Rattus norvegicus (Rat).